The sequence spans 282 residues: NFU1 iron-sulfur cluster scaffold homolog, mitochondrial (282 aa).

The N-terminal 27 residues, 1 to 27 (MSKLLSYTARIILRNSRITVRQLVRGF), are a transit peptide targeting the mitochondrion. Positions 178–246 (IKELLDTRIR…IPEVESVEQV (69 aa)) are nifU. Residues cysteine 215 and cysteine 218 each coordinate [4Fe-4S] cluster. The segment at 263–282 (KNLKQKEPAGAPVGIGGGPN) is disordered.

The protein belongs to the NifU family.

It is found in the mitochondrion. In terms of biological role, molecular scaffold for [Fe-S] cluster assembly of mitochondrial iron-sulfur proteins. This Drosophila persimilis (Fruit fly) protein is NFU1 iron-sulfur cluster scaffold homolog, mitochondrial.